A 347-amino-acid polypeptide reads, in one-letter code: NADH-ubiquinone oxidoreductase chain 2 (347 aa).

11 helical membrane-spanning segments follow: residues 1–21 (MNPL…SIIL), 25–45 (HWFM…PVLM), 59–79 (YFLT…INLM), 96–116 (LLIT…FWVP), 122–142 (VSLQ…LAVM), 145–165 (IFAS…IMIG), 178–198 (IMAY…IYNP), 200–220 (LMLL…MMFM), 242–262 (VLMM…GFMP), 274–294 (NSVI…FFYM), and 325–345 (LLAP…MFIL).

The protein belongs to the complex I subunit 2 family. Core subunit of respiratory chain NADH dehydrogenase (Complex I) which is composed of 45 different subunits. Interacts with TMEM242.

Its subcellular location is the mitochondrion inner membrane. The catalysed reaction is a ubiquinone + NADH + 5 H(+)(in) = a ubiquinol + NAD(+) + 4 H(+)(out). Core subunit of the mitochondrial membrane respiratory chain NADH dehydrogenase (Complex I) which catalyzes electron transfer from NADH through the respiratory chain, using ubiquinone as an electron acceptor. Essential for the catalytic activity and assembly of complex I. The sequence is that of NADH-ubiquinone oxidoreductase chain 2 from Myosorex kihaulei (Kihaule's mouse shrew).